We begin with the raw amino-acid sequence, 152 residues long: Protein SprT-like (152 aa).

Residues 13–148 (NYVKKVSIED…FACGYCHGRL (136 aa)) enclose the SprT-like domain. His72 lines the Zn(2+) pocket. Glu73 is an active-site residue. Residue His76 coordinates Zn(2+).

The protein belongs to the SprT family. The cofactor is Zn(2+).

Its subcellular location is the cytoplasm. The sequence is that of Protein SprT-like from Streptococcus agalactiae serotype III (strain NEM316).